A 139-amino-acid chain; its full sequence is Thiosulfate:glutathione sulfurtransferase (139 aa).

The residue at position 26 (serine 26) is a Phosphoserine. The region spanning 37-138 is the Rhodanese domain; it reads HDPNVVLVDV…WVSHGGDKLD (102 aa). Cysteine 98 acts as the Cysteine persulfide intermediate in catalysis.

It localises to the mitochondrion. The enzyme catalyses thiosulfate + glutathione = S-sulfanylglutathione + sulfite + H(+). Its activity is regulated as follows. GSS(-) is a potent inhibitor of RDL1, since the presence of the sulfur dioxygenase strongly increases the RDL1 catalytic activity. Its function is as follows. Thiosulfate:glutathione sulfurtransferase (TST) required to produce S-sulfanylglutathione (GSS(-)), a central intermediate in hydrogen sulfide metabolism. Provides the link between the first step in H(2)S metabolism performed by the sulfide:quinone oxidoreductase (SQOR) which catalyzes the conversion of H(2)S to thiosulfate, and the sulfur dioxygenase (SDO) which uses GSS(-) as substrate. The thermodynamic coupling of the irreversible SDO and reversible TST reactions provides a model for the physiologically relevant reaction with thiosulfate as the sulfane donor. The sequence is that of Thiosulfate:glutathione sulfurtransferase (RDL1) from Saccharomyces cerevisiae (strain ATCC 204508 / S288c) (Baker's yeast).